Reading from the N-terminus, the 355-residue chain is Peptide chain release factor 1 (355 aa).

An N5-methylglutamine modification is found at Q233. The segment covering 281-293 (RRNKEQERADSRR) has biased composition (basic and acidic residues). A disordered region spans residues 281 to 308 (RRNKEQERADSRRGQIGSGDRSERIRTY).

It belongs to the prokaryotic/mitochondrial release factor family. Methylated by PrmC. Methylation increases the termination efficiency of RF1.

It is found in the cytoplasm. In terms of biological role, peptide chain release factor 1 directs the termination of translation in response to the peptide chain termination codons UAG and UAA. The chain is Peptide chain release factor 1 from Rickettsia akari (strain Hartford).